A 132-amino-acid polypeptide reads, in one-letter code: NADH-quinone oxidoreductase subunit A 2 (132 aa).

Helical transmembrane passes span 9–29 (AWAF…MLGL), 66–86 (LVAM…LWAV), and 93–113 (WAGF…LFYL).

It belongs to the complex I subunit 3 family. In terms of assembly, NDH-1 is composed of 13 different subunits. Subunits NuoA, H, J, K, L, M, N constitute the membrane sector of the complex.

It is found in the cell inner membrane. It catalyses the reaction a quinone + NADH + 5 H(+)(in) = a quinol + NAD(+) + 4 H(+)(out). Functionally, NDH-1 shuttles electrons from NADH, via FMN and iron-sulfur (Fe-S) centers, to quinones in the respiratory chain. The immediate electron acceptor for the enzyme in this species is believed to be ubiquinone. Couples the redox reaction to proton translocation (for every two electrons transferred, four hydrogen ions are translocated across the cytoplasmic membrane), and thus conserves the redox energy in a proton gradient. The sequence is that of NADH-quinone oxidoreductase subunit A 2 from Pseudomonas paraeruginosa (strain DSM 24068 / PA7) (Pseudomonas aeruginosa (strain PA7)).